A 303-amino-acid chain; its full sequence is Olfactory receptor 4X2 (303 aa).

The Extracellular segment spans residues Met1–Arg17. The helical transmembrane segment at Val18–Val41 threads the bilayer. Residues Met42–Ser49 lie on the Cytoplasmic side of the membrane. The helical transmembrane segment at Pro50–Pro71 threads the bilayer. Topologically, residues Lys72–Gln92 are extracellular. A disulfide bridge connects residues Cys89 and Cys181. A helical membrane pass occupies residues Leu93 to Tyr112. The Cytoplasmic portion of the chain corresponds to Asp113–Gln131. Residues Val132–Ala150 form a helical membrane-spanning segment. The Extracellular segment spans residues Gln151 to Ile187. Residues Gly188–Met211 form a helical membrane-spanning segment. Topologically, residues Val212–Lys227 are cytoplasmic. The helical transmembrane segment at Ala228–Ser250 threads the bilayer. The Extracellular segment spans residues Leu251–Lys261. A helical transmembrane segment spans residues Met262 to Leu281. Residues Arg282–Lys303 lie on the Cytoplasmic side of the membrane.

The protein belongs to the G-protein coupled receptor 1 family.

Its subcellular location is the cell membrane. In terms of biological role, odorant receptor. In Homo sapiens (Human), this protein is Olfactory receptor 4X2 (OR4X2).